A 503-amino-acid polypeptide reads, in one-letter code: ATP synthase subunit alpha (503 aa).

An ATP-binding site is contributed by 170–177 (GDRQTGKT).

As to quaternary structure, F-type ATPases have 2 components, CF(1) - the catalytic core - and CF(0) - the membrane proton channel. CF(1) has five subunits: alpha(3), beta(3), gamma(1), delta(1), epsilon(1). CF(0) has four main subunits: a(1), b(1), b'(1) and c(9-12).

It is found in the cellular thylakoid membrane. The enzyme catalyses ATP + H2O + 4 H(+)(in) = ADP + phosphate + 5 H(+)(out). Inhibited by dicyclohexylcarbodiimide. Its function is as follows. Produces ATP from ADP in the presence of a proton gradient across the membrane. The alpha chain is a regulatory subunit. The complex from the organism is particularly stable to disruption and remains functional after 6 hrs at 55 degrees Celsius. This chain is ATP synthase subunit alpha, found in Thermosynechococcus vestitus (strain NIES-2133 / IAM M-273 / BP-1).